A 1320-amino-acid chain; its full sequence is MYSVEDLLISHGYKPARDAAAPCEDKSERCRSTRTGPRAGQGLLNGYKDGATAHTHSRTSLGTGHVSNSENRISRPRGHREHQSTSRTPEARFLNQPSLAWSSQPQSGRDDIYWSRGRQEGSGSLCPRDWKELESRGMAQAYSLPVHVRENLWEVAGRTEHVMKNAIWEEELRMQDMSLESWKKPRELGRQASDGDGRKRPQEKFEGLYPFVHGEHTSQNRKKSQSLPRALSPKSLNFTEIPVPLHDGHITGVPKVPPYPPSFPSPSEPMRNLEKASSSGPFPRPKFGKPLKTPCYSSHSQPRGEGGFQDHQHRDPRGSYPTRSKDPSHELGMLDPGLEPPVYVPPPSYRSPPQHIPNPYLEDPVPRHVSSNQSQQQVPEKPETSCPLPSGSLAARDLYDAMPGSPPQGLPPQPYPIATHGGSIQYIPFDDPRIRHIKLAQPPEFYEEAKLDDTSYNPGLLTTQEPAIGKRQYDDAPSVPRGPTPSPVNEQSSAFVHSSPRWLQGQLPLGIGPGGFHGQTEHHVMGGLTTNVTDIKAEGHASSPQPQSEGTCKTYTKLRKFETGVQSKKSSKKKSNATIFCLVSIPVKSESLVLATDTNNNDFKLVADKTRGLCQGSALQEQSLLSMSSTDLELQALMGSMAWRRTSPRQGLRESEDGQIDDPRILHLIKPKELQASSPWPGHQYRDQQTQTSFHEDSKSSQLLPATKPGEASNVAPTPTCPDTTASEVCLHTALAFSDQNQKPSVPHLQGQTSLSPSRNSAFSRTSSAINQASMSKGTSDQLPGANPVPKPEVVKGESTTGQCNSTQLFGQFLLKPVSRRPWDLISQLESFNKELQEEEESHGGSGSEDSEAEQPEDCADSRTKSWALQGTRTAQQPAGLALENVASPDRRLNDSQSWNEEPKPGHSSVHPQSLGPSQEEGSRGVPVQWADGSLTAEQKSQEDLNGMCERDFSPRPVSRIAPIDTKAAPLYCLSEPRGSQELTKFGDAVGSVQLGRETPTQVGNGGDTEVLPCVLLPLADKYRGHSTPDFRSLELTLGQEQNAYKLECLDLENTVEVLPSESLQERAERILGIEVAVESLLPSARRTEQSQLPEPDASACNPSSSREDSSHSLALPVGPKVATDAFYGRRKCGWTESPLFVGERAPQASICSDVDGFPTSQATSPEPGKKDEEAKAPFKSTLFHFMEKSTNVVGPEKRLRNPSKVVENLQEKLVSPPKKADSVHLIRMREVNSLSQMRCLSSKSADSVEEPDPLKVIKSSAWLSEGLTSLGGKDEAWQAGHLPSVSQNENGHPEVPRDKMSDQDLWCADSYDPSRVERV.

Disordered regions lie at residues 1–124 (MYSV…GSGS), 183–202 (KKPRELGRQASDGDGRKRPQ), 209–233 (YPFVHGEHTSQNRKKSQSLPRALSP), 252–426 (GVPK…SIQY), 452–492 (DDTS…NEQS), 676–720 (ASSP…PTPT), 741–802 (NQKP…STTG), and 835–942 (ELQE…QKSQ). 2 stretches are compositionally biased toward polar residues: residues 58 to 71 (RTSLGTGHVSNSEN) and 95 to 107 (NQPSLAWSSQPQS). A compositionally biased stretch (basic and acidic residues) spans 108–119 (GRDDIYWSRGRQ). Positions 255-267 (KVPPYPPSFPSPS) are enriched in pro residues. The span at 308–329 (FQDHQHRDPRGSYPTRSKDPSH) shows a compositional bias: basic and acidic residues. Positions 338-356 (LEPPVYVPPPSYRSPPQHI) are enriched in pro residues. Residues 369–378 (VSSNQSQQQV) are compositionally biased toward polar residues. Residues 404–415 (GSPPQGLPPQPY) show a composition bias toward pro residues. Over residues 454–465 (TSYNPGLLTTQE) the composition is skewed to polar residues. Phosphothreonine is present on Thr484. Ser486 is modified (phosphoserine). A compositionally biased stretch (polar residues) spans 741–782 (NQKPSVPHLQGQTSLSPSRNSAFSRTSSAINQASMSKGTSDQ). The span at 849 to 859 (EDSEAEQPEDC) shows a compositional bias: acidic residues. Ser851 carries the phosphoserine modification. Residues 865–877 (KSWALQGTRTAQQ) show a composition bias toward polar residues. Phosphoserine is present on residues Ser1027 and Ser1033. Disordered regions lie at residues 1085 to 1116 (ARRTEQSQLPEPDASACNPSSSREDSSHSLAL) and 1153 to 1174 (SDVDGFPTSQATSPEPGKKDEE). Ser1245 and Ser1248 each carry phosphoserine. Residues 1275–1320 (DEAWQAGHLPSVSQNENGHPEVPRDKMSDQDLWCADSYDPSRVERV) form a disordered region. Positions 1292–1303 (GHPEVPRDKMSD) are enriched in basic and acidic residues.

Its subcellular location is the cell junction. The protein resides in the adherens junction. In Mus musculus (Mouse), this protein is Junctional cadherin 5-associated protein.